Reading from the N-terminus, the 391-residue chain is Mycofactocin maturase MftC (391 aa).

The Radical SAM core domain maps to 16-232 (LDAPICLTWE…KGERVLTGDS (217 aa)). Residues Cys30, Cys34, Cys37, Cys251, Cys258, Cys269, Cys310, Cys313, Cys319, Cys323, and Cys341 each coordinate [4Fe-4S] cluster. The segment at 340 to 391 (ECVQGHSEPALARERHLPRPRADHSRGRRVSKPVPLTLSMRPPKRPCNESPV) is disordered. Residues 350 to 364 (LARERHLPRPRADHS) are compositionally biased toward basic and acidic residues.

Belongs to the radical SAM superfamily. It depends on [4Fe-4S] cluster as a cofactor.

The enzyme catalyses [mycofactocin precursor peptide]-C-terminal glycyl-L-valyl-L-tyrosine + S-adenosyl-L-methionine = [mycofactocin precursor peptide]-C-terminal glycyl-N-{[2-(4-hydroxyphenyl)ethenyl]-3-methylbutanamide} + 5'-deoxyadenosine + L-methionine + CO2. The catalysed reaction is [mycofactocin precursor peptide]-C-terminal glycyl-N-{[2-(4-hydroxyphenyl)ethenyl]-3-methylbutanamide} + AH2 + S-adenosyl-L-methionine = [mycofactocin precursor peptide]-C-terminal glycyl-N-{5-[(4-hydroxyphenyl)methyl]-4,4-dimethyl-2-oxopyrrolidin-3-yl}acetamide + 5'-deoxyadenosine + L-methionine + A + H(+). Its function is as follows. Radical S-adenosylmethionine (SAM) enzyme responsible for the first step of the biosynthesis of the enzyme cofactor mycofactocin (MFT). Catalyzes two reactions at the C-terminus of the mycofactocin precursor (the MftA peptide). The first one is the oxidative decarboxylation of the C-terminal L-tyrosine of MftA, forming an unsaturated tyramine moiety. The second reaction is the cross-linking of the tyramine with the penultimate L-valine residue, forming a five-membered lactam ring. Its activity requires the presence of the MftB chaperone. This Mycobacterium tuberculosis (strain CDC 1551 / Oshkosh) protein is Mycofactocin maturase MftC (mftC).